A 302-amino-acid polypeptide reads, in one-letter code: GTPase Era (302 aa).

The Era-type G domain maps to 8-175 (HSGFVAIIGR…LTTLKGQLPE (168 aa)). A G1 region spans residues 16–23 (GRPNVGKS). 16-23 (GRPNVGKS) contributes to the GTP binding site. Residues 42–46 (QTTRN) form a G2 region. The segment at 63–66 (DTPG) is G3. Residues 63–67 (DTPGI) and 125–128 (NKID) each bind GTP. Residues 125 to 128 (NKID) are G4. The segment at 154-156 (ISA) is G5. Positions 206 to 283 (TRQEVPHSTA…YLELWVKVQE (78 aa)) constitute a KH type-2 domain.

Belongs to the TRAFAC class TrmE-Era-EngA-EngB-Septin-like GTPase superfamily. Era GTPase family. As to quaternary structure, monomer.

The protein resides in the cytoplasm. Its subcellular location is the cell membrane. In terms of biological role, an essential GTPase that binds both GDP and GTP, with rapid nucleotide exchange. Plays a role in 16S rRNA processing and 30S ribosomal subunit biogenesis and possibly also in cell cycle regulation and energy metabolism. This chain is GTPase Era, found in Lactiplantibacillus plantarum (strain ATCC BAA-793 / NCIMB 8826 / WCFS1) (Lactobacillus plantarum).